The primary structure comprises 159 residues: Ribosomal RNA large subunit methyltransferase H (159 aa).

Residues Leu76, Gly108, and 127 to 132 contribute to the S-adenosyl-L-methionine site; that span reads FSKMTF.

Belongs to the RNA methyltransferase RlmH family. In terms of assembly, homodimer.

The protein resides in the cytoplasm. The catalysed reaction is pseudouridine(1915) in 23S rRNA + S-adenosyl-L-methionine = N(3)-methylpseudouridine(1915) in 23S rRNA + S-adenosyl-L-homocysteine + H(+). Its function is as follows. Specifically methylates the pseudouridine at position 1915 (m3Psi1915) in 23S rRNA. The sequence is that of Ribosomal RNA large subunit methyltransferase H from Staphylococcus aureus (strain MSSA476).